Consider the following 271-residue polypeptide: 4-hydroxy-tetrahydrodipicolinate reductase (271 aa).

10–15 (GAAGRM) contacts NAD(+). Arg37 is a binding site for NADP(+). NAD(+)-binding positions include 100 to 102 (GTT) and 124 to 127 (SGNM). The active-site Proton donor/acceptor is His157. Residue His158 participates in (S)-2,3,4,5-tetrahydrodipicolinate binding. Lys161 acts as the Proton donor in catalysis. 167-168 (GT) serves as a coordination point for (S)-2,3,4,5-tetrahydrodipicolinate. Residues 183–202 (SLSEHEQRGRDGHTGPRKDG) form a disordered region. Residues 185 to 202 (SEHEQRGRDGHTGPRKDG) are compositionally biased toward basic and acidic residues.

This sequence belongs to the DapB family.

The protein resides in the cytoplasm. It catalyses the reaction (S)-2,3,4,5-tetrahydrodipicolinate + NAD(+) + H2O = (2S,4S)-4-hydroxy-2,3,4,5-tetrahydrodipicolinate + NADH + H(+). The catalysed reaction is (S)-2,3,4,5-tetrahydrodipicolinate + NADP(+) + H2O = (2S,4S)-4-hydroxy-2,3,4,5-tetrahydrodipicolinate + NADPH + H(+). It functions in the pathway amino-acid biosynthesis; L-lysine biosynthesis via DAP pathway; (S)-tetrahydrodipicolinate from L-aspartate: step 4/4. Catalyzes the conversion of 4-hydroxy-tetrahydrodipicolinate (HTPA) to tetrahydrodipicolinate. The polypeptide is 4-hydroxy-tetrahydrodipicolinate reductase (Beijerinckia indica subsp. indica (strain ATCC 9039 / DSM 1715 / NCIMB 8712)).